The primary structure comprises 457 residues: Oxygen-independent coproporphyrinogen III oxidase (457 aa).

The Radical SAM core domain occupies 47-279 (LKNPMPLSLY…EILESLISFL (233 aa)). Y56 contributes to the S-adenosyl-L-methionine binding site. [4Fe-4S] cluster-binding residues include C62 and C66. An S-adenosyl-L-methionine-binding site is contributed by F68. C69 is a [4Fe-4S] cluster binding site. Residues G113, 114–115 (GT), E147, Q174, R186, D211, A245, and I331 each bind S-adenosyl-L-methionine.

This sequence belongs to the anaerobic coproporphyrinogen-III oxidase family. In terms of assembly, monomer. Requires [4Fe-4S] cluster as cofactor.

The protein resides in the cytoplasm. The catalysed reaction is coproporphyrinogen III + 2 S-adenosyl-L-methionine = protoporphyrinogen IX + 2 5'-deoxyadenosine + 2 L-methionine + 2 CO2. It participates in porphyrin-containing compound metabolism; protoporphyrin-IX biosynthesis; protoporphyrinogen-IX from coproporphyrinogen-III (AdoMet route): step 1/1. Involved in the heme biosynthesis. Catalyzes the anaerobic oxidative decarboxylation of propionate groups of rings A and B of coproporphyrinogen III to yield the vinyl groups in protoporphyrinogen IX. This chain is Oxygen-independent coproporphyrinogen III oxidase (hemN), found in Helicobacter pylori (strain ATCC 700392 / 26695) (Campylobacter pylori).